The chain runs to 457 residues: Biphenyl dioxygenase subunit alpha (457 aa).

Positions 58–174 constitute a Rieske domain; sequence WLMLGHETHI…VETYKGLVFA (117 aa). Residues Cys-100, His-102, Cys-120, and His-123 each contribute to the [2Fe-2S] cluster site. Positions 233 and 239 each coordinate Fe cation.

Belongs to the bacterial ring-hydroxylating dioxygenase alpha subunit family. As to quaternary structure, heterohexamer consisting of three BphA subunits and three BphE subunits. A ferredoxin (BphF) and a ferredoxin reductase (BphG) must be present to obtain activity. [2Fe-2S] cluster serves as cofactor. Requires Fe cation as cofactor.

It catalyses the reaction biphenyl + NADH + O2 + H(+) = (2R,3S)-3-phenylcyclohexa-3,5-diene-1,2-diol + NAD(+). The protein operates within xenobiotic degradation; biphenyl degradation; 2-hydroxy-2,4-pentadienoate and benzoate from biphenyl: step 1/4. The chain is Biphenyl dioxygenase subunit alpha (bphA) from Comamonas testosteroni (Pseudomonas testosteroni).